Here is a 94-residue protein sequence, read N- to C-terminus: Sucrose operon repressor (94 aa).

Residues 1-56 (MASLHDVARLAGVSKSTVSRVINDEYGVKEATKQKVRQAVAECGYVPNQVAKDLKE) form the HTH lacI-type domain. The H-T-H motif DNA-binding region spans 4–23 (LHDVARLAGVSKSTVSRVIN).

Functionally, repressor for the scr operon. Binds D-fructose as an inducer. This chain is Sucrose operon repressor (scrR), found in Vibrio alginolyticus.